The primary structure comprises 341 residues: Transcription factor ETV7 (341 aa).

A PNT domain is found at 33–117 (NLLGEGGICK…ELLQYIKTQR (85 aa)). The ETS DNA-binding region spans 224 to 305 (RLLWDYVYQL…PGQKLLFRFL (82 aa)). A disordered region spans residues 315–341 (KHSHLEPLESQEQDRIEFKDKRPEISP).

It belongs to the ETS family. As to expression, expressed in hematopoietic tissues.

It is found in the nucleus. Functionally, transcriptional repressor; binds to the DNA sequence 5'-CCGGAAGT-3'. Isoform A does not seem to have a repressor activity. Isoform C does not seem to have a repressor activity. This chain is Transcription factor ETV7 (ETV7), found in Homo sapiens (Human).